A 24-amino-acid polypeptide reads, in one-letter code: Alpha-lactalbumin (24 aa).

The protein belongs to the glycosyl hydrolase 22 family. Lactose synthase (LS) is a heterodimer of a catalytic component, beta1,4-galactosyltransferase (beta4Gal-T1) and a regulatory component, alpha-lactalbumin (LA). In terms of processing, glycosylated (50% of the proteins). Mammary gland specific. Secreted in milk.

The protein localises to the secreted. Its function is as follows. Regulatory subunit of lactose synthase, changes the substrate specificity of galactosyltransferase in the mammary gland making glucose a good acceptor substrate for this enzyme. This enables LS to synthesize lactose, the major carbohydrate component of milk. In other tissues, galactosyltransferase transfers galactose onto the N-acetylglucosamine of the oligosaccharide chains in glycoproteins. The polypeptide is Alpha-lactalbumin (LALBA) (Felis catus (Cat)).